The following is a 200-amino-acid chain: Lipopolysaccharide core heptose(II)-phosphate phosphatase (200 aa).

Positions 1-25 (MLAFCRSSLKSKKYFIILLALAAIA) are cleaved as a signal peptide.

Belongs to the phosphoglycerate mutase family. Ais subfamily.

It localises to the periplasm. The protein operates within bacterial outer membrane biogenesis; lipopolysaccharide metabolism. Its function is as follows. Catalyzes the dephosphorylation of heptose(II) of the outer membrane lipopolysaccharide core. The protein is Lipopolysaccharide core heptose(II)-phosphate phosphatase of Escherichia coli O7:K1 (strain IAI39 / ExPEC).